The sequence spans 177 residues: O-acetyl-ADP-ribose deacetylase (177 aa).

The region spanning 1-175 is the Macro domain; it reads MKTRIHVVQG…LYERLLTQQG (175 aa). Substrate contacts are provided by residues 11 to 12, N25, 33 to 35, and 122 to 126; these read DI, GVD, and STGVY. D35 serves as the catalytic Proton acceptor.

Belongs to the MacroD-type family. YmdB subfamily. Homodimer. Interacts with RNase III.

The enzyme catalyses 3''-O-acetyl-ADP-D-ribose + H2O = ADP-D-ribose + acetate + H(+). The catalysed reaction is 2''-O-acetyl-ADP-D-ribose + H2O = ADP-D-ribose + acetate + H(+). Functionally, deacetylates O-acetyl-ADP ribose to yield ADP-ribose and free acetate. Down-regulates ribonuclease 3 (RNase III) activity. Acts by interacting directly with the region of the ribonuclease that is required for dimerization/activation. This is O-acetyl-ADP-ribose deacetylase from Shigella dysenteriae serotype 1 (strain Sd197).